A 505-amino-acid chain; its full sequence is Cytochrome P450 CYP71D313 (505 aa).

The helical transmembrane segment at 1 to 21 threads the bilayer; the sequence is MELQFPLFSIFFVTILFFFLF. Residue Cys441 participates in heme binding. A helical transmembrane segment spans residues 442–462; sequence PGIAFGIATIELPLALLLYHF.

This sequence belongs to the cytochrome P450 family. Heme is required as a cofactor.

It localises to the membrane. Probable heme-thiolate monooxygenase. This chain is Cytochrome P450 CYP71D313, found in Panax ginseng (Korean ginseng).